We begin with the raw amino-acid sequence, 98 residues long: Large ribosomal subunit protein uL23 (98 aa).

It belongs to the universal ribosomal protein uL23 family. As to quaternary structure, part of the 50S ribosomal subunit. Contacts protein L29, and trigger factor when it is bound to the ribosome.

Functionally, one of the early assembly proteins it binds 23S rRNA. One of the proteins that surrounds the polypeptide exit tunnel on the outside of the ribosome. Forms the main docking site for trigger factor binding to the ribosome. This is Large ribosomal subunit protein uL23 from Frankia casuarinae (strain DSM 45818 / CECT 9043 / HFP020203 / CcI3).